The following is a 465-amino-acid chain: ATP synthase subunit beta (465 aa).

155–162 (GGAGVGKT) contacts ATP.

This sequence belongs to the ATPase alpha/beta chains family. In terms of assembly, F-type ATPases have 2 components, CF(1) - the catalytic core - and CF(0) - the membrane proton channel. CF(1) has five subunits: alpha(3), beta(3), gamma(1), delta(1), epsilon(1). CF(0) has three main subunits: a(1), b(2) and c(9-12). The alpha and beta chains form an alternating ring which encloses part of the gamma chain. CF(1) is attached to CF(0) by a central stalk formed by the gamma and epsilon chains, while a peripheral stalk is formed by the delta and b chains.

It is found in the cell membrane. The catalysed reaction is ATP + H2O + 4 H(+)(in) = ADP + phosphate + 5 H(+)(out). Its function is as follows. Produces ATP from ADP in the presence of a proton gradient across the membrane. The catalytic sites are hosted primarily by the beta subunits. The chain is ATP synthase subunit beta from Buchnera aphidicola subsp. Acyrthosiphon pisum (strain 5A).